A 280-amino-acid chain; its full sequence is Urease accessory protein UreD 1 (280 aa).

The protein belongs to the UreD family. As to quaternary structure, ureD, UreF and UreG form a complex that acts as a GTP-hydrolysis-dependent molecular chaperone, activating the urease apoprotein by helping to assemble the nickel containing metallocenter of UreC. The UreE protein probably delivers the nickel.

The protein resides in the cytoplasm. Its function is as follows. Required for maturation of urease via the functional incorporation of the urease nickel metallocenter. This is Urease accessory protein UreD 1 from Brucella canis (strain ATCC 23365 / NCTC 10854 / RM-666).